The sequence spans 453 residues: NADH-quinone oxidoreductase subunit D (453 aa).

Residues 1–21 show a composition bias toward basic and acidic residues; it reads MKDTETRPGRHRAPEPAHPEQ. The tract at residues 1-30 is disordered; it reads MKDTETRPGRHRAPEPAHPEQPDTTGDTVV.

This sequence belongs to the complex I 49 kDa subunit family. In terms of assembly, NDH-1 is composed of 14 different subunits. Subunits NuoB, C, D, E, F, and G constitute the peripheral sector of the complex.

It is found in the cell membrane. It catalyses the reaction a quinone + NADH + 5 H(+)(in) = a quinol + NAD(+) + 4 H(+)(out). In terms of biological role, NDH-1 shuttles electrons from NADH, via FMN and iron-sulfur (Fe-S) centers, to quinones in the respiratory chain. The immediate electron acceptor for the enzyme in this species is believed to be a menaquinone. Couples the redox reaction to proton translocation (for every two electrons transferred, four hydrogen ions are translocated across the cytoplasmic membrane), and thus conserves the redox energy in a proton gradient. The chain is NADH-quinone oxidoreductase subunit D from Nocardia farcinica (strain IFM 10152).